We begin with the raw amino-acid sequence, 466 residues long: MTYAPVNDVLSGKLAVDSEVTVRGWIRTRRDSKAGISFLAIYDGSCFNPIQAVVPNNLNNYDNEVLKLTTGCSVEVTGKIVESPASGQAFELAASDVKVVGWVEDADTYPMAKTRHSIEYLREVAHLRPRTNVIGAVARVRNCLAQAIHRFYHEQGYFWVSAPLITASDAEGAGEMFRVSTLDMENLPRTDAGKVDYNQDFFGKETFLTVSGQLNAEAYACAISKVYTFGPTFRAENSNTSRHLAEFWMVEPEVAFADLNTVAKLAEDMLKYVFKAVLAERRDDLEFFNDRINNEVIARLEQFVESDFAQVDYTDAIEILKNCGKTFEFPVEWGIDLASEHERFLAEEHFKAPVIVKNYPKDIKAFYMRMNEDGKTVAAMDVLAPGIGEIIGGSQREERLDILDARMREFGIDPEHMDWYRDLRRYGTVPHAGFGLGFERLVSYVTGMGNVRDVIPFPRTPRSASF.

It belongs to the class-II aminoacyl-tRNA synthetase family. As to quaternary structure, homodimer.

It localises to the cytoplasm. The catalysed reaction is tRNA(Asn) + L-asparagine + ATP = L-asparaginyl-tRNA(Asn) + AMP + diphosphate + H(+). This is Asparagine--tRNA ligase from Vibrio cholerae serotype O1 (strain ATCC 39315 / El Tor Inaba N16961).